The primary structure comprises 454 residues: Immediate-early protein ICP-46 homolog (454 aa).

Positions 330–357 (EKDIETIEKYEKTIQELIVELHNLYLKR) form a coiled coil. The segment at 428 to 454 (SSPTASLSSLSPPSSNNNSPIRSPIRM) is disordered.

The protein belongs to the IIV-6 393L family.

This chain is Immediate-early protein ICP-46 homolog, found in Invertebrate iridescent virus 6 (IIV-6).